A 79-amino-acid polypeptide reads, in one-letter code: Cytochrome b (79 aa).

A run of 3 helical transmembrane segments spans residues 1-7 (TALLLAM), 31-52 (WLIR…YLHI), and 67-79 (WNIG…TLMA). Heme b contacts are provided by H37 and H51.

Belongs to the cytochrome b family. As to quaternary structure, the cytochrome bc1 complex contains 11 subunits: 3 respiratory subunits (MT-CYB, CYC1 and UQCRFS1), 2 core proteins (UQCRC1 and UQCRC2) and 6 low-molecular weight proteins (UQCRH/QCR6, UQCRB/QCR7, UQCRQ/QCR8, UQCR10/QCR9, UQCR11/QCR10 and a cleavage product of UQCRFS1). This cytochrome bc1 complex then forms a dimer. Heme b is required as a cofactor.

The protein localises to the mitochondrion inner membrane. Functionally, component of the ubiquinol-cytochrome c reductase complex (complex III or cytochrome b-c1 complex) that is part of the mitochondrial respiratory chain. The b-c1 complex mediates electron transfer from ubiquinol to cytochrome c. Contributes to the generation of a proton gradient across the mitochondrial membrane that is then used for ATP synthesis. The polypeptide is Cytochrome b (MT-CYB) (Corcorax melanoramphos (White-winged chough)).